The primary structure comprises 340 residues: tRNA N6-adenosine threonylcarbamoyltransferase (340 aa).

Fe cation is bound by residues H115 and H119. Residues 138 to 142, D171, G184, D188, and N278 contribute to the substrate site; that span reads VVSGG. Position 306 (D306) interacts with Fe cation.

It belongs to the KAE1 / TsaD family. Requires Fe(2+) as cofactor.

Its subcellular location is the cytoplasm. It catalyses the reaction L-threonylcarbamoyladenylate + adenosine(37) in tRNA = N(6)-L-threonylcarbamoyladenosine(37) in tRNA + AMP + H(+). Functionally, required for the formation of a threonylcarbamoyl group on adenosine at position 37 (t(6)A37) in tRNAs that read codons beginning with adenine. Is involved in the transfer of the threonylcarbamoyl moiety of threonylcarbamoyl-AMP (TC-AMP) to the N6 group of A37, together with TsaE and TsaB. TsaD likely plays a direct catalytic role in this reaction. The sequence is that of tRNA N6-adenosine threonylcarbamoyltransferase from Clostridium botulinum (strain Kyoto / Type A2).